The chain runs to 320 residues: Putative FBD-associated F-box protein At3g60710 (320 aa).

Residues 2–48 (EDLISQLPNELLQEILLNLPTSESVRTSVLPTRWRNLWQSVPGLYLI) form the F-box domain. The region spanning 212–268 (MEEIASSPVPKCLQTSIENVKIKMTPKADQEKSRKAETEVANYILENATLLKLTLWL) is the FBD domain.

The polypeptide is Putative FBD-associated F-box protein At3g60710 (Arabidopsis thaliana (Mouse-ear cress)).